The following is a 276-amino-acid chain: Merozoite surface protein 2 (276 aa).

An N-terminal signal peptide occupies residues 1 to 20; that stretch reads MKVIKTLSIINFFIFVTFNI. N-linked (GlcNAc...) asparagine glycosylation is found at asparagine 22 and asparagine 36. The interval 44-202 is polymorphic region; sequence AESNPSTGAG…EQTESPELQS (159 aa). The interval 44-242 is disordered; it reads AESNPSTGAG…CTDGNKENCG (199 aa). The segment covering 51–90 has biased composition (gly residues); that stretch reads GAGGSGSAGGSGSAGGSGSAGGSGSAGGSGSAGSGDGNGA. 5 repeat units span residues 53-58, 59-64, 65-70, 71-76, and 77-82. A 5 X 6 AA tandem repeats of G-G-S-G-S-A region spans residues 53–82; that stretch reads GGSGSAGGSGSAGGSGSAGGSGSAGGSGSA. Residues 91-127 show a composition bias toward low complexity; that stretch reads NPGADAERSPSTPATTTTTTTTNDAEASTSTSSENPN. 3 stretches are compositionally biased toward polar residues: residues 143–169, 176–187, and 194–204; these read KPNQ…NVPP, KSPTAQPEQAEN, and QTESPELQSAP. Asparagine 153 carries an N-linked (GlcNAc...) asparagine glycan. N-linked (GlcNAc...) asparagine glycosylation occurs at asparagine 225. Over residues 229-238 the composition is skewed to basic and acidic residues; that stretch reads SQKECTDGNK. A disulfide bridge connects residues cysteine 233 and cysteine 241. Residue asparagine 250 is glycosylated (N-linked (GlcNAc...) asparagine). A lipid anchor (GPI-anchor amidated asparagine) is attached at asparagine 250. Residues 251 to 276 constitute a propeptide, removed in mature form; sequence SSNIASINKFVVLISATLVLSFAIFI.

It is found in the cell membrane. Functionally, may play a role in the merozoite attachment to the erythrocyte. The protein is Merozoite surface protein 2 of Plasmodium falciparum (isolate 7G8).